Here is a 717-residue protein sequence, read N- to C-terminus: Polyribonucleotide nucleotidyltransferase (717 aa).

Mg(2+) is bound by residues aspartate 488 and aspartate 494. Positions 555–614 (PRIEVMNIPVDKIREVIGSGGKVIREIVEKTGAKINIEDDGTVKIASSSGKEIEAARKWI) constitute a KH domain. The S1 motif domain maps to 624-692 (GQIYEGTVVK…ERGKVRLSMK (69 aa)).

The protein belongs to the polyribonucleotide nucleotidyltransferase family. Mg(2+) serves as cofactor.

It is found in the cytoplasm. The enzyme catalyses RNA(n+1) + phosphate = RNA(n) + a ribonucleoside 5'-diphosphate. Involved in mRNA degradation. Catalyzes the phosphorolysis of single-stranded polyribonucleotides processively in the 3'- to 5'-direction. This chain is Polyribonucleotide nucleotidyltransferase, found in Sinorhizobium fredii (strain NBRC 101917 / NGR234).